A 561-amino-acid polypeptide reads, in one-letter code: Arginine--tRNA ligase (561 aa).

Positions 129 to 139 (ANPTGPLHVGH) match the 'HIGH' region motif.

It belongs to the class-I aminoacyl-tRNA synthetase family. Monomer.

It is found in the cytoplasm. It carries out the reaction tRNA(Arg) + L-arginine + ATP = L-arginyl-tRNA(Arg) + AMP + diphosphate. The polypeptide is Arginine--tRNA ligase (Bordetella petrii (strain ATCC BAA-461 / DSM 12804 / CCUG 43448)).